We begin with the raw amino-acid sequence, 512 residues long: Protein disulfide-isomerase (512 aa).

The first 24 residues, 1 to 24, serve as a signal peptide directing secretion; sequence MAKNVAIFGLLFSLLLLVPSQIFA. One can recognise a Thioredoxin 1 domain in the interval 25 to 144; that stretch reads EESSTDAKEF…IVEYLKKQSG (120 aa). Active-site nucleophile residues include C62 and C65. An intrachain disulfide couples C62 to C65. The N-linked (GlcNAc...) asparagine glycan is linked to N278. Residues 357–485 form the Thioredoxin 2 domain; that stretch reads YKDGKVEPFV…IIEFIEKNKD (129 aa). Residues C407 and C410 each act as nucleophile in the active site. C407 and C410 are disulfide-bonded. Basic and acidic residues predominate over residues 487–496; that stretch reads TGAAHQEVEQ. The disordered stretch occupies residues 487 to 512; sequence TGAAHQEVEQPKAAAQPEAEQPKDEL. Residues 509 to 512 carry the Prevents secretion from ER motif; the sequence is KDEL.

This sequence belongs to the protein disulfide isomerase family.

It is found in the endoplasmic reticulum lumen. It catalyses the reaction Catalyzes the rearrangement of -S-S- bonds in proteins.. Its function is as follows. Participates in the folding of proteins containing disulfide bonds, may be involved in glycosylation, prolyl hydroxylation and triglyceride transfer. The protein is Protein disulfide-isomerase (PDI) of Medicago sativa (Alfalfa).